A 264-amino-acid chain; its full sequence is S-adenosylmethionine decarboxylase proenzyme (264 aa).

S113 (schiff-base intermediate with substrate; via pyruvic acid) is an active-site residue. A Pyruvic acid (Ser); by autocatalysis modification is found at S113. H118 acts as the Proton acceptor; for processing activity in catalysis. The active-site Proton donor; for catalytic activity is the C141.

Belongs to the prokaryotic AdoMetDC family. Type 2 subfamily. In terms of assembly, heterooctamer of four alpha and four beta chains arranged as a tetramer of alpha/beta heterodimers. The cofactor is pyruvate. Post-translationally, is synthesized initially as an inactive proenzyme. Formation of the active enzyme involves a self-maturation process in which the active site pyruvoyl group is generated from an internal serine residue via an autocatalytic post-translational modification. Two non-identical subunits are generated from the proenzyme in this reaction, and the pyruvate is formed at the N-terminus of the alpha chain, which is derived from the carboxyl end of the proenzyme. The post-translation cleavage follows an unusual pathway, termed non-hydrolytic serinolysis, in which the side chain hydroxyl group of the serine supplies its oxygen atom to form the C-terminus of the beta chain, while the remainder of the serine residue undergoes an oxidative deamination to produce ammonia and the pyruvoyl group blocking the N-terminus of the alpha chain.

It carries out the reaction S-adenosyl-L-methionine + H(+) = S-adenosyl 3-(methylsulfanyl)propylamine + CO2. It participates in amine and polyamine biosynthesis; S-adenosylmethioninamine biosynthesis; S-adenosylmethioninamine from S-adenosyl-L-methionine: step 1/1. In terms of biological role, catalyzes the decarboxylation of S-adenosylmethionine to S-adenosylmethioninamine (dcAdoMet), the propylamine donor required for the synthesis of the polyamines spermine and spermidine from the diamine putrescine. The chain is S-adenosylmethionine decarboxylase proenzyme from Pseudomonas paraeruginosa (strain DSM 24068 / PA7) (Pseudomonas aeruginosa (strain PA7)).